Reading from the N-terminus, the 215-residue chain is Thiamine-phosphate synthase (215 aa).

Residues 42–46 and aspartate 77 each bind 4-amino-2-methyl-5-(diphosphooxymethyl)pyrimidine; that span reads QYREK. 2 residues coordinate Mg(2+): aspartate 78 and aspartate 97. A 4-amino-2-methyl-5-(diphosphooxymethyl)pyrimidine-binding site is contributed by serine 116. 143–145 serves as a coordination point for 2-[(2R,5Z)-2-carboxy-4-methylthiazol-5(2H)-ylidene]ethyl phosphate; it reads TKS. Position 146 (lysine 146) interacts with 4-amino-2-methyl-5-(diphosphooxymethyl)pyrimidine. 2-[(2R,5Z)-2-carboxy-4-methylthiazol-5(2H)-ylidene]ethyl phosphate-binding positions include glycine 174 and 194–195; that span reads IS.

It belongs to the thiamine-phosphate synthase family. Requires Mg(2+) as cofactor.

It carries out the reaction 2-[(2R,5Z)-2-carboxy-4-methylthiazol-5(2H)-ylidene]ethyl phosphate + 4-amino-2-methyl-5-(diphosphooxymethyl)pyrimidine + 2 H(+) = thiamine phosphate + CO2 + diphosphate. It catalyses the reaction 2-(2-carboxy-4-methylthiazol-5-yl)ethyl phosphate + 4-amino-2-methyl-5-(diphosphooxymethyl)pyrimidine + 2 H(+) = thiamine phosphate + CO2 + diphosphate. The catalysed reaction is 4-methyl-5-(2-phosphooxyethyl)-thiazole + 4-amino-2-methyl-5-(diphosphooxymethyl)pyrimidine + H(+) = thiamine phosphate + diphosphate. Its pathway is cofactor biosynthesis; thiamine diphosphate biosynthesis; thiamine phosphate from 4-amino-2-methyl-5-diphosphomethylpyrimidine and 4-methyl-5-(2-phosphoethyl)-thiazole: step 1/1. In terms of biological role, condenses 4-methyl-5-(beta-hydroxyethyl)thiazole monophosphate (THZ-P) and 2-methyl-4-amino-5-hydroxymethyl pyrimidine pyrophosphate (HMP-PP) to form thiamine monophosphate (TMP). The polypeptide is Thiamine-phosphate synthase (Limosilactobacillus reuteri (strain DSM 20016) (Lactobacillus reuteri)).